The chain runs to 658 residues: DNA mismatch repair protein MutL (658 aa).

Positions 114–130 (RQEDSSHATQVKAEDGK) are enriched in basic and acidic residues. A disordered region spans residues 114–137 (RQEDSSHATQVKAEDGKLSSPTAA).

Belongs to the DNA mismatch repair MutL/HexB family.

Functionally, this protein is involved in the repair of mismatches in DNA. It is required for dam-dependent methyl-directed DNA mismatch repair. May act as a 'molecular matchmaker', a protein that promotes the formation of a stable complex between two or more DNA-binding proteins in an ATP-dependent manner without itself being part of a final effector complex. In Neisseria meningitidis serogroup C / serotype 2a (strain ATCC 700532 / DSM 15464 / FAM18), this protein is DNA mismatch repair protein MutL.